Reading from the N-terminus, the 309-residue chain is Cytochrome c biogenesis protein CcsA (309 aa).

8 helical membrane-spanning segments follow: residues 18-38 (LGLL…GAVF), 48-68 (LITI…WSIS), 73-93 (ISNL…GQLL), 102-122 (IIPS…CFVL), 148-168 (VMLS…VLFI), 216-236 (SILV…VWAN), 250-267 (TWAF…HMRI), and 279-299 (LAST…FLGI).

The protein belongs to the CcmF/CycK/Ccl1/NrfE/CcsA family. As to quaternary structure, may interact with ccs1.

It localises to the cellular thylakoid membrane. Required during biogenesis of c-type cytochromes (cytochrome c6 and cytochrome f) at the step of heme attachment. The polypeptide is Cytochrome c biogenesis protein CcsA (Prochlorococcus marinus (strain AS9601)).